The following is a 548-amino-acid chain: Membrane protein insertase YidC (548 aa).

The helical transmembrane segment at 6–26 (NLLVIALLFVSFMIWQAWEQD) threads the bilayer. Residues 28–56 (NPQPQTQQTTQTTTTAAGSAADQGVPASG) are disordered. Residues 29 to 42 (PQPQTQQTTQTTTT) show a composition bias toward low complexity. Helical transmembrane passes span 350–370 (FVGNWGFSIIIITFIVRGIMY), 424–444 (FPLIIQMPIFLALYYMLMGSI), 458–478 (LSAQDPYYILPILMGVTMFFI), and 499–519 (PVIFTVFFLWFPSGLVLYYIV).

This sequence belongs to the OXA1/ALB3/YidC family. Type 1 subfamily. As to quaternary structure, interacts with the Sec translocase complex via SecD. Specifically interacts with transmembrane segments of nascent integral membrane proteins during membrane integration.

Its subcellular location is the cell inner membrane. In terms of biological role, required for the insertion and/or proper folding and/or complex formation of integral membrane proteins into the membrane. Involved in integration of membrane proteins that insert both dependently and independently of the Sec translocase complex, as well as at least some lipoproteins. Aids folding of multispanning membrane proteins. This is Membrane protein insertase YidC from Salmonella heidelberg (strain SL476).